Consider the following 271-residue polypeptide: RELT-like protein 1 (271 aa).

The signal sequence occupies residues Met1–Ser23. Residues Ser24 to Glu57 lie on the Extracellular side of the membrane. The segment at Val27–Gly52 is disordered. Residues Pro36–Gly52 are compositionally biased toward low complexity. Residues Tyr58–Cys78 traverse the membrane as a helical segment. Topologically, residues His79–Glu271 are cytoplasmic. Phosphoserine is present on residues Ser109 and Ser114. 2 disordered regions span residues Cys144–Gly168 and Thr231–Glu271. Positions Pro155 to Leu165 are enriched in pro residues. A compositionally biased stretch (basic and acidic residues) spans Thr231–Ser244. Phosphoserine occurs at positions 244 and 247.

Belongs to the RELT family. As to quaternary structure, interacts with RELT, RELL2, OXSR1 and PLSCR1.

It localises to the cell membrane. Induces activation of MAPK14/p38 cascade, when overexpressed. Induces apoptosis, when overexpressed. The polypeptide is RELT-like protein 1 (RELL1) (Bos taurus (Bovine)).